We begin with the raw amino-acid sequence, 925 residues long: Proto-oncogene DBL (925 aa).

Positions 1 to 88 constitute a CRAL-TRIO domain; sequence MAEANPRRGK…ELGGTLQYCH (88 aa). A Spectrin repeat occupies 221-322; it reads WKFEQDFQQL…EIKAKRIQLS (102 aa). The DH domain maps to 495-675; the sequence is LKNHVLNELI…LDLLKSVNDS (181 aa). The 123-residue stretch at 687–809 folds into the PH domain; sequence NLNELGKMIM…WLKEIRNILL (123 aa).

The protein belongs to the MCF2 family. As to quaternary structure, interacts with an array of inositol phospholipids such as phosphatidylinositol 3-phosphate (PI3P), phosphatidylinositol 4-phosphate (PI4P) and phosphatidylinositol 5-phosphate (PI5P). May interact with CCPG1. Post-translationally, phosphorylation by TNK2 enhances guanine nucleotide exchange factor (GEF) activity toward Rho family proteins. Isoform 1 is expressed only in brain. Isoform 3 is expressed in heart, kidney, spleen, liver and testis. Isoform 4 is expressed in brain, heart, kidney, testis, placenta, stomach and peripheral blood. The protein is detectable in brain, heart, kidney, intestine, muscle, lung and testis.

Its subcellular location is the cytoplasm. It localises to the membrane. In terms of biological role, guanine nucleotide exchange factor (GEF) that modulates the Rho family of GTPases. Promotes the conversion of some member of the Rho family GTPase from the GDP-bound to the GTP-bound form. Isoform 1 exhibits no activity toward RHOA, RAC1 or CDC42. Isoform 2 exhibits decreased GEF activity toward CDC42. Isoform 3 exhibits a weak but significant activity toward RAC1 and CDC42. Isoform 4 exhibits significant activity toward RHOA and CDC42. The truncated DBL oncogene is active toward RHOA, RAC1 and CDC42. In Homo sapiens (Human), this protein is Proto-oncogene DBL (MCF2).